We begin with the raw amino-acid sequence, 92 residues long: Sec-independent protein translocase protein TatA (92 aa).

Residues 2–22 (IPANFGGTELIILLVIILLLF) form a helical membrane-spanning segment. Residues 43–92 (KGTSGAYEELEEKKGEEEKDEGGKKEAEASGRGEEEQQARAAGEAGRKQG) are disordered. Residues 53–80 (EEKKGEEEKDEGGKKEAEASGRGEEEQQ) are compositionally biased toward basic and acidic residues.

It belongs to the TatA/E family. The Tat system comprises two distinct complexes: a TatABC complex, containing multiple copies of TatA, TatB and TatC subunits, and a separate TatA complex, containing only TatA subunits. Substrates initially bind to the TatABC complex, which probably triggers association of the separate TatA complex to form the active translocon.

The protein localises to the cell membrane. Its function is as follows. Part of the twin-arginine translocation (Tat) system that transports large folded proteins containing a characteristic twin-arginine motif in their signal peptide across membranes. TatA could form the protein-conducting channel of the Tat system. This Rubrobacter xylanophilus (strain DSM 9941 / JCM 11954 / NBRC 16129 / PRD-1) protein is Sec-independent protein translocase protein TatA.